Consider the following 790-residue polypeptide: B3 domain-containing transcription repressor VAL1 (790 aa).

The interval 234–260 (KPSRPAISTPPVASKSAQARIGRPPVE) is disordered. Positions 295–396 (FEKTLSASDA…KLIMGSRKAA (102 aa)) form a DNA-binding region, TF-B3. Disordered stretches follow at residues 400-429 (DMQG…SING) and 446-468 (NLNS…EKKR). A compositionally biased stretch (polar residues) spans 405–429 (GLTNGTSTEDTSSSGVTENPPSING). The segment at 538-588 (SGEQERWATCDDCSKWRRLPVDALLSFKWTCIDNVWDVSRCSCSAPEESLK) adopts a CW-type zinc-finger fold. Residues C547, C550, C568, and C580 each coordinate Zn(2+). Positions 685-732 (LMMRRKKKQLERDVTAAEDKKKKDMELAESDKSKEEKEVNTARIDLNS) form a coiled coil. The tract at residues 689 to 737 (RKKKQLERDVTAAEDKKKKDMELAESDKSKEEKEVNTARIDLNSDPYNK) is disordered. Basic and acidic residues predominate over residues 694–724 (LERDVTAAEDKKKKDMELAESDKSKEEKEVN).

Interacts with SNL1. As to expression, expressed in flowers and at lower levels in roots, stems and leaves.

The protein localises to the nucleus. Transcriptional repressor of gene expression involved in embryonic pathways, such as LEC1, ABI3, and FUS3. Repressor of the sugar-inducible genes involved in the seed maturation program in seedlings. Plays an essential role in regulating the transition from seed maturation to seedling growth. Functionally redundant with VAL2/HSL1. In Arabidopsis thaliana (Mouse-ear cress), this protein is B3 domain-containing transcription repressor VAL1 (VAL1).